Consider the following 162-residue polypeptide: NADH-quinone oxidoreductase subunit I (162 aa).

2 4Fe-4S ferredoxin-type domains span residues arginine 54–glutamate 83 and threonine 93–isoleucine 122. [4Fe-4S] cluster is bound by residues cysteine 63, cysteine 66, cysteine 69, cysteine 73, cysteine 102, cysteine 105, cysteine 108, and cysteine 112.

It belongs to the complex I 23 kDa subunit family. In terms of assembly, NDH-1 is composed of 14 different subunits. Subunits NuoA, H, J, K, L, M, N constitute the membrane sector of the complex. [4Fe-4S] cluster is required as a cofactor.

The protein localises to the cell inner membrane. It catalyses the reaction a quinone + NADH + 5 H(+)(in) = a quinol + NAD(+) + 4 H(+)(out). Functionally, NDH-1 shuttles electrons from NADH, via FMN and iron-sulfur (Fe-S) centers, to quinones in the respiratory chain. The immediate electron acceptor for the enzyme in this species is believed to be ubiquinone. Couples the redox reaction to proton translocation (for every two electrons transferred, four hydrogen ions are translocated across the cytoplasmic membrane), and thus conserves the redox energy in a proton gradient. This Paraburkholderia xenovorans (strain LB400) protein is NADH-quinone oxidoreductase subunit I.